We begin with the raw amino-acid sequence, 1774 residues long: Collagen alpha-1(XVIII) chain (1774 aa).

Residues 1–26 form the signal peptide; that stretch reads MAPDPSRRLCLLLLLLLSCRLVPASA. A nonhelical region 1 (NC1) region spans residues 27 to 785; that stretch reads DGNSLSPLNP…QNPGRGLIKG (759 aa). Disordered stretches follow at residues 47 to 113 and 218 to 269; these read DSLE…TPAV and LPPF…LEGK. Composition is skewed to polar residues over residues 55–87 and 244–256; these read KPQN…TPAS and LSSS…SWGN. Residues Asn354 and Asn361 are each glycosylated (N-linked (GlcNAc...) asparagine). An FZ domain is found at 365 to 482; sequence TSTSRCLPLP…SQEDGYCVFI (118 aa). Cystine bridges form between Cys370/Cys433, Cys380/Cys426, Cys417/Cys455, Cys444/Cys479, and Cys448/Cys468. Residues 522 to 704 enclose the Laminin G-like domain; the sequence is GPDSNSGQVA…EDRASGDFGS (183 aa). Residue Asn585 is glycosylated (N-linked (GlcNAc...) asparagine). Residues 681 to 1458 are disordered; sequence RVSPVHCLDE…PPGPPGAMGA (778 aa). Basic and acidic residues predominate over residues 708-717; sequence ESSKSHKEDT. Thr730 is modified (phosphothreonine). Residues 786–812 form a triple-helical region 1 (COL1) region; sequence GMKGQKGEPGAQGPPGPAGPQGPAGPV. The segment covering 809–824 has biased composition (low complexity); sequence AGPVVQSPNSQPVPGA. A nonhelical region 2 (NC2) region spans residues 813–822; sequence VQSPNSQPVP. The region spanning 823-878 is the Collagen-like 1 domain; it reads GAQGPPGPQGPPGKDGTPGRDGEPGDPGEDGRPGDTGPQGFPGTPGDVGPKGEKGD. The interval 823–896 is triple-helical region 2 (COL2); the sequence is GAQGPPGPQG…PGPPGPPGPS (74 aa). A compositionally biased stretch (basic and acidic residues) spans 839–855; it reads TPGRDGEPGDPGEDGRP. A compositionally biased stretch (pro residues) spans 884 to 895; that stretch reads RGPPGPPGPPGP. The segment at 897–920 is nonhelical region 3 (NC3); the sequence is FRQDKLTFIDMEGSGFSGDIESLR. Ser910 carries O-linked (Xyl...) (chondroitin sulfate) serine glycosylation. Residues 921 to 1042 are triple-helical region 3 (COL3); sequence GPRGFPGPPG…PGPPGPPGPG (122 aa). The span at 925–935 shows a compositional bias: pro residues; sequence FPGPPGPPGVP. Residue Asn947 is glycosylated (N-linked (GlcNAc...) asparagine). Low complexity predominate over residues 951–963; it reads APGPAGLPGVPGK. 2 Collagen-like domains span residues 953–1007 and 1008–1041; these read GPAG…GSKG and DLGP…PPGP. 2 stretches are compositionally biased toward pro residues: residues 967–982 and 1026–1041; these read PGFP…PGKE and PVGP…PPGP. Positions 1043-1065 are nonhelical region 4 (NC4); the sequence is FAAGFDDMEGSGIPLWTTARSSD. Collagen-like domains lie at 1066 to 1117, 1118 to 1147, 1162 to 1202, and 1216 to 1264; these read GLQG…GPKG, EKGM…PPGP, PGPE…GEPG, and QKGA…EPGD. The triple-helical region 4 (COL4) stretch occupies residues 1066-1148; the sequence is GLQGPPGSPG…PGPPGPPGPV (83 aa). Residues 1138–1147 show a composition bias toward pro residues; it reads LPGPPGPPGP. Residues 1149 to 1162 form a nonhelical region 5 (NC5) region; sequence IYVSSEDKAIVSTP. Residues 1163-1204 are triple-helical region 5 (COL5); it reads GPEGKPGYAGFPGPAGPKGDLGSKGEQGLPGPKGEKGEPGTI. The nonhelical region 6 (NC6) stretch occupies residues 1205–1217; it reads FSPDGRALGHPQK. Positions 1218–1290 are triple-helical region 6 (COL6); sequence GAKGEPGFRG…PGPPGPPGMP (73 aa). Pro residues predominate over residues 1275-1289; the sequence is PGPPGPPGPPGPPGM. A nonhelical region 7 (NC7) region spans residues 1291–1300; that stretch reads IYDSNAFVES. Residues 1301–1317 are compositionally biased toward low complexity; it reads GRPGLPGQQGVQGPSGP. The triple-helical region 7 (COL7) stretch occupies residues 1301–1333; the sequence is GRPGLPGQQGVQGPSGPKGDKGEVGPPGPPGQF. The interval 1334–1345 is nonhelical region 8 (NC8); it reads PIDLFHLEAEMK. Residues 1338 to 1362 show a composition bias toward basic and acidic residues; sequence FHLEAEMKGDKGDRGDAGQKGERGE. The tract at residues 1346-1369 is triple-helical region 8 (COL8); that stretch reads GDKGDRGDAGQKGERGEPGAPGGG. The Cell attachment site signature appears at 1351 to 1353; sequence RGD. Positions 1370-1376 are nonhelical region 9 (NC9); it reads FFSSSVP. 4 stretches are compositionally biased toward pro residues: residues 1376-1388, 1398-1407, 1418-1431, and 1441-1453; these read PGPP…PGIP, PPGPPGPQGP, PPGP…PSFP, and PGPP…PGPP. Residues 1377-1428 are triple-helical region 9 (COL9); the sequence is GPPGPPGYPGIPGPKGESIRGPPGPPGPQGPPGIGYEGRQGPPGPPGPPGPP. The interval 1429–1441 is nonhelical region 10 (NC10); that stretch reads SFPGPHRQTVSVP. A triple-helical region 10 (COL10) region spans residues 1442-1459; it reads GPPGPPGPPGPPGAMGAS. The tract at residues 1460-1774 is nonhelical region 11 (NC11); it reads AGQVRIWATY…ENSFMTSFSK (315 aa). The segment at 1474–1519 is non-collagenous domain 1 association domain; sequence DKIREVPEGWLIFVAEREELYVRVRNGFRKVLLEARTALPRGTGNE. The non-collagenous domain 1 hinge region stretch occupies residues 1520–1590; sequence VAALQPPLVQ…PPARPTLSLA (71 aa). Residues His1591, His1593, Asp1595, His1601, and Asp1666 each contribute to the Zn(2+) site. Cystine bridges form between Cys1623-Cys1763 and Cys1725-Cys1755.

The protein belongs to the multiplexin collagen family. In terms of assembly, forms homotrimers. Recombinant non-collagenous domain 1 has stronger affinity to NID1, HSPG2 and laminin-1:NID1 complex and lower affinity to FBLN1 and FBLN2 than endostatin. Monomeric. Interacts with KDR/VEGFR2. Interacts with the ITGA5:ITGB1 complex. Interacts with NID1, HSPG2, laminin-1:NID1 complex, FBLN1 and FBLN2. Prolines at the third position of the tripeptide repeating unit (G-X-Y) of the triple-helical regions are hydroxylated. Post-translationally, undergoes proteolytic processing by CTSL/cathepsin-L and elastase-like proteases to generate both non-collagenous domain 1 trimers and endostatin monomers. In tissue extracts (brain, skeletal muscle, heart, kidney, testis and liver) predominantly bands of approximately 38 kDa are detected; recombinant non-collagenous domain 1 shows similar mobility. In vitro, several proteolytic cleavage sites in the non-collagenous domain 1 hinge region generating different endostatin-like peptides are reported. Expressed in liver, kidney, lung, skeletal muscle and testis.

The protein localises to the secreted. It is found in the extracellular space. The protein resides in the extracellular matrix. It localises to the basement membrane. In terms of biological role, probably plays a major role in determining the retinal structure as well as in the closure of the neural tube. May regulate extracellular matrix-dependent motility and morphogenesis of endothelial and non-endothelial cells; the function requires homotrimerization and implicates MAPK signaling. Its function is as follows. Potently inhibits endothelial cell proliferation and angiogenesis. May inhibit angiogenesis by binding to the heparan sulfate proteoglycans involved in growth factor signaling. Inhibits VEGFA isoform VEGF165-induced endothelial cell proliferation and migration. Seems to inhibit VEGFA-mediated signaling by blocking the interaction of VEGFA to its receptor KDR/VEGFR2. Modulates endothelial cell migration in an integrin-dependent manner implicating integrin ITGA5:ITGB1 and to a lesser extent ITGAV:ITGB3 and ITGAV:ITGB5. May negatively regulate the activity of homotrimeric non-collagenous domain 1. The sequence is that of Collagen alpha-1(XVIII) chain from Mus musculus (Mouse).